We begin with the raw amino-acid sequence, 470 residues long: MSHHPSGLRAGFSSTSYRRTFGPPPSLSPGAFSYSSSSRFSSSRLLGSASPSSSVRLGSFRSPRAGAGALLRLPSERLDFSMAEALNQEFLATRSNEKQELQELNDRFANFIEKVRFLEQQNAALRGELSQARGQEPARADQLCQQELRELRRELELLGRERDRVQVERDGLAEDLAALKQRLEEETRKREDAEHNLVLFRKDVDDATLSRLELERKIESLMDEIEFLKKLHEEELRDLQVSVESQQVQQVEVEATVKPELTAALRDIRAQYESIAAKNLQEAEEWYKSKYADLSDAANRNHEALRQAKQEMNESRRQIQSLTCEVDGLRGTNEALLRQLRELEEQFALEAGGYQAGAARLEEELRQLKEEMARHLREYQELLNVKMALDIEIATYRKLLEGEESRISVPVHSFASLNIKTTVPEVEPPQDSHSRKTVLIKTIETRNGEVVTESQKEQRSELDKSSAHSY.

Residues 1–99 (MSHHPSGLRA…FLATRSNEKQ (99 aa)) are head. Tyr-17 is subject to 3'-nitrotyrosine. Phosphoserine occurs at positions 28, 50, and 59. In terms of domain architecture, IF rod spans 97–407 (EKQELQELND…KLLEGEESRI (311 aa)). Residues 100 to 132 (ELQELNDRFANFIEKVRFLEQQNAALRGELSQA) are coil 1A. Residues 133–143 (RGQEPARADQL) form a linker 1 region. Positions 144-239 (CQQELRELRR…KLHEEELRDL (96 aa)) are coil 1B. The segment at 240 to 262 (QVSVESQQVQQVEVEATVKPELT) is linker 2. The segment at 263 to 405 (AALRDIRAQY…YRKLLEGEES (143 aa)) is coil 2. The residue at position 379 (Tyr-379) is a 3'-nitrotyrosine. Positions 406-470 (RISVPVHSFA…ELDKSSAHSY (65 aa)) are tail. The disordered stretch occupies residues 447-470 (NGEVVTESQKEQRSELDKSSAHSY). Positions 454 to 470 (SQKEQRSELDKSSAHSY) are enriched in basic and acidic residues. Tyr-470 carries the post-translational modification Phosphotyrosine.

It belongs to the intermediate filament family. In terms of assembly, forms homodimers (in vitro). Homopolymerizes into a filamentous network (in vitro). Forms heterodimers with NEFL, NEFM or NEFH (in vitro). Interacts with DST (via C-terminus). Interacts with RAB7A; the interaction is direct. Interacts with PRKCE (via phorbol-ester/DAG-type 2 domain). Phosphorylated; phosphorylation increases after nerve injury in regenerating neurons. Expressed in the neurons of the outer hair cells in the organ of Corti and to a lesser extent in type I spiral ganglion cells.

It is found in the cytoplasm. The protein localises to the cytoskeleton. The protein resides in the cell projection. Its subcellular location is the axon. It localises to the perikaryon. In terms of biological role, class-III neuronal intermediate filament protein. May form an independent structural network without the involvement of other neurofilaments or may cooperate with the neuronal intermediate filament proteins NEFL, NEFH, NEFM and INA to form a filamentous network. Assembly of the neuronal intermediate filaments may be regulated by RAB7A. Plays a role in the development of unmyelinated sensory neurons. May be involved in axon elongation and axon regeneration after injury. Inhibits neurite extension in type II spiral ganglion neurons in the cochlea. The protein is Peripherin (PRPH) of Homo sapiens (Human).